Consider the following 273-residue polypeptide: Ribosomal RNA small subunit methyltransferase A (273 aa).

S-adenosyl-L-methionine is bound by residues Asn18, Leu20, Gly45, Glu66, Asp91, and Asn113.

The protein belongs to the class I-like SAM-binding methyltransferase superfamily. rRNA adenine N(6)-methyltransferase family. RsmA subfamily.

The protein resides in the cytoplasm. The enzyme catalyses adenosine(1518)/adenosine(1519) in 16S rRNA + 4 S-adenosyl-L-methionine = N(6)-dimethyladenosine(1518)/N(6)-dimethyladenosine(1519) in 16S rRNA + 4 S-adenosyl-L-homocysteine + 4 H(+). Its function is as follows. Specifically dimethylates two adjacent adenosines (A1518 and A1519) in the loop of a conserved hairpin near the 3'-end of 16S rRNA in the 30S particle. May play a critical role in biogenesis of 30S subunits. The sequence is that of Ribosomal RNA small subunit methyltransferase A from Salmonella agona (strain SL483).